Here is a 250-residue protein sequence, read N- to C-terminus: NAD(P)H-quinone oxidoreductase subunit K (250 aa).

[4Fe-4S] cluster-binding residues include Cys-60, Cys-61, Cys-125, and Cys-156. The tract at residues 230 to 250 is disordered; sequence ELNTSEIDASPASQPSSTYES. A compositionally biased stretch (polar residues) spans 231 to 250; it reads LNTSEIDASPASQPSSTYES.

It belongs to the complex I 20 kDa subunit family. As to quaternary structure, NDH-1 can be composed of about 15 different subunits; different subcomplexes with different compositions have been identified which probably have different functions. Requires [4Fe-4S] cluster as cofactor.

The protein resides in the cellular thylakoid membrane. It catalyses the reaction a plastoquinone + NADH + (n+1) H(+)(in) = a plastoquinol + NAD(+) + n H(+)(out). The catalysed reaction is a plastoquinone + NADPH + (n+1) H(+)(in) = a plastoquinol + NADP(+) + n H(+)(out). NDH-1 shuttles electrons from an unknown electron donor, via FMN and iron-sulfur (Fe-S) centers, to quinones in the respiratory and/or the photosynthetic chain. The immediate electron acceptor for the enzyme in this species is believed to be plastoquinone. Couples the redox reaction to proton translocation, and thus conserves the redox energy in a proton gradient. Cyanobacterial NDH-1 also plays a role in inorganic carbon-concentration. This is NAD(P)H-quinone oxidoreductase subunit K from Prochlorococcus marinus (strain MIT 9303).